Here is a 617-residue protein sequence, read N- to C-terminus: Protein kinase STUNTED (617 aa).

The segment at 162–187 is disordered; that stretch reads SSELSEGFSDKDLAKTTGQEKRKISG. A compositionally biased stretch (basic and acidic residues) spans 169 to 184; sequence FSDKDLAKTTGQEKRK. In terms of domain architecture, Protein kinase spans 277–555; sequence FSLENLIGKG…RGEDDVSKWV (279 aa). Residues 283–291 and K305 contribute to the ATP site; that span reads IGKGGCNEV. Y350 is modified (phosphotyrosine). D399 functions as the Proton acceptor in the catalytic mechanism. S403 carries the phosphoserine modification. T439 is subject to Phosphothreonine. Y447 bears the Phosphotyrosine mark. The segment at 590-617 is disordered; sequence DSVSNSSLERSNNSLFSSSSSSSQELQS. Over residues 591–617 the composition is skewed to low complexity; the sequence is SVSNSSLERSNNSLFSSSSSSSQELQS.

Belongs to the protein kinase superfamily. Ser/Thr protein kinase family. Expressed ubiquitously, mostly in roots, to a lower extent in leaves, floral buds and stems, and, at low levels, in flowers and siliques.

It localises to the cytoplasm. Functionally, promotes cell proliferation in the gibberellic acid (GA) signaling pathway, acting downstream of RGA, and possibly through a negative regulation of two cyclin-dependent kinase inhibitors SIM and SMR1. This chain is Protein kinase STUNTED, found in Arabidopsis thaliana (Mouse-ear cress).